The chain runs to 262 residues: Carboxy-S-adenosyl-L-methionine synthase (262 aa).

S-adenosyl-L-methionine-binding positions include Tyr-50, 84–86, 137–138, Asn-152, and Arg-219; these read GCS and DI.

The protein belongs to the class I-like SAM-binding methyltransferase superfamily. Cx-SAM synthase family. Homodimer.

The enzyme catalyses prephenate + S-adenosyl-L-methionine = carboxy-S-adenosyl-L-methionine + 3-phenylpyruvate + H2O. In terms of biological role, catalyzes the conversion of S-adenosyl-L-methionine (SAM) to carboxy-S-adenosyl-L-methionine (Cx-SAM). In Psychrobacter arcticus (strain DSM 17307 / VKM B-2377 / 273-4), this protein is Carboxy-S-adenosyl-L-methionine synthase.